The sequence spans 184 residues: uncharacterized protein (184 aa).

One can recognise a 4Fe-4S domain in the interval 72 to 135; sequence RKSQAILLIG…GIALGSAVKV (64 aa). [4Fe-4S] cluster-binding residues include Cys92, Cys95, Cys100, and Cys118.

It depends on [4Fe-4S] cluster as a cofactor.

This is an uncharacterized protein from Archaeoglobus fulgidus (strain ATCC 49558 / DSM 4304 / JCM 9628 / NBRC 100126 / VC-16).